A 58-amino-acid polypeptide reads, in one-letter code: Amyloid-beta precursor protein (58 aa).

At 1 to 34 the chain is on the extracellular side; that stretch reads ISEVKMDAEFRHDSGYEVHHQKLVFFAEDVGSNK. His12, Tyr16, His19, and His20 together coordinate Cu(2+). 4 residues coordinate Zn(2+): His12, Tyr16, His19, and His20. The chain crosses the membrane as a helical span at residues 35-58; the sequence is GAIIGLMVGGVVIATVIVITLVML.

The protein belongs to the APP family. Binds, via its C-terminus, to the PID domain of several cytoplasmic proteins, including APBB family members, the APBA family, MAPK8IP1, SHC1 and NUMB and DAB1. Binding to DAB1 inhibits its serine phosphorylation. Interacts (via NPXY motif) with DAB2 (via PID domain); the interaction is impaired by tyrosine phosphorylation of the NPXY motif. Also interacts with GPCR-like protein BPP, APPBP1, IB1, KNS2 (via its TPR domains), APPBP2 (via BaSS) and DDB1. In vitro, it binds MAPT via the MT-binding domains. Associates with microtubules in the presence of ATP and in a kinesin-dependent manner. Interacts, through a C-terminal domain, with GNAO1. Interacts with CPEB1, ANKS1B and AGER. Interacts with ITM2B. Interacts with ITM2C. Interacts with IDE. Can form homodimers; dimerization is enhanced in the presence of Cu(2+) ions. Can form homodimers; this is promoted by heparin binding. Interacts with SORL1 (via N-terminal ectodomain); this interaction retains APP in the trans-Golgi network and reduces processing into soluble APP-alpha and amyloid-beta peptides. Interacts with PLD3. Interacts with VDAC1. Interacts with NSG1; could regulate APP processing. Amyloid-beta protein 42 interacts with FPR2. Interacts with LRRK2. Interacts (via cytoplasmic domain) with KIF5B. Interacts (via C-terminus) with APBB2/FE65L1 (via C-terminus). Interacts (via intracellular domain) with APBB3. Proteolytically processed under normal cellular conditions. Cleavage either by alpha-secretase, beta-secretase or theta-secretase leads to generation and extracellular release of soluble APP peptides, S-APP-alpha and S-APP-beta, and the retention of corresponding membrane-anchored C-terminal fragments, C80, C83 and C99. Subsequent processing of C80 and C83 by gamma-secretase yields P3 peptides. This is the major secretory pathway and is non-amyloidogenic. Alternatively, presenilin/nicastrin-mediated gamma-secretase processing of C99 releases the amyloid-beta proteins, amyloid-beta protein 40 and amyloid-beta protein 42, major components of amyloid plaques, and the cytotoxic C-terminal fragments, gamma-CTF(50), gamma-CTF(57) and gamma-CTF(59). PSEN1 cleavage is more efficient with C83 than with C99 as substrate (in vitro). Amyloid-beta protein 40 and Amyloid-beta protein 42 are cleaved by ACE. Many other minor amyloid-beta peptides, amyloid-beta 1-X peptides, are found in cerebral spinal fluid (CSF) including the amyloid-beta X-15 peptides, produced from the cleavage by alpha-secretase.

The protein localises to the cell membrane. It localises to the membrane. Its subcellular location is the perikaryon. It is found in the cell projection. The protein resides in the growth cone. The protein localises to the clathrin-coated pit. It localises to the early endosome. Its subcellular location is the cytoplasmic vesicle. It is found in the secreted. The protein resides in the cell surface. The protein localises to the nucleus. It localises to the cytoplasm. Its function is as follows. Functions as a cell surface receptor and performs physiological functions on the surface of neurons relevant to neurite growth, neuronal adhesion and axonogenesis. Interaction between APP molecules on neighboring cells promotes synaptogenesis. Involved in cell mobility and transcription regulation through protein-protein interactions. Can promote transcription activation through binding to APBB1-KAT5 and inhibit Notch signaling through interaction with Numb. Couples to apoptosis-inducing pathways such as those mediated by G(o) and JIP. Inhibits G(o)-alpha ATPase activity. Acts as a kinesin I membrane receptor, mediating the axonal transport of beta-secretase and presenilin 1. By acting as a kinesin I membrane receptor, plays a role in axonal anterograde transport of cargo towards synapses in axons. May be involved in copper homeostasis/oxidative stress through copper ion reduction. In vitro, copper-metallated APP induces neuronal death directly or is potentiated through Cu(2+)-mediated low-density lipoprotein oxidation. Can regulate neurite outgrowth through binding to components of the extracellular matrix such as heparin and collagen I and IV. Induces a AGER-dependent pathway that involves activation of p38 MAPK, resulting in internalization of amyloid-beta peptide and mitochondrial dysfunction in cultured cortical neurons. Provides Cu(2+) ions for GPC1 which are required for release of nitric oxide (NO) and subsequent degradation of the heparan sulfate chains on GPC1. The chain is Amyloid-beta precursor protein (APP) from Canis lupus familiaris (Dog).